Reading from the N-terminus, the 427-residue chain is Peptidase B (427 aa).

2 residues coordinate Mn(2+): Lys-195 and Asp-200. The active site involves Lys-207. Asp-218, Asp-277, and Glu-279 together coordinate Mn(2+). Residue Arg-281 is part of the active site.

It belongs to the peptidase M17 family. In terms of assembly, homohexamer. Mn(2+) serves as cofactor.

Its subcellular location is the cytoplasm. The catalysed reaction is Release of an N-terminal amino acid, Xaa, from a peptide or arylamide. Xaa is preferably Glu or Asp but may be other amino acids, including Leu, Met, His, Cys and Gln.. Its function is as follows. Probably plays an important role in intracellular peptide degradation. The chain is Peptidase B from Escherichia coli (strain K12 / MC4100 / BW2952).